The primary structure comprises 156 residues: Small ribosomal subunit protein uS7 (156 aa).

Belongs to the universal ribosomal protein uS7 family. As to quaternary structure, part of the 30S ribosomal subunit. Contacts proteins S9 and S11.

Functionally, one of the primary rRNA binding proteins, it binds directly to 16S rRNA where it nucleates assembly of the head domain of the 30S subunit. Is located at the subunit interface close to the decoding center, probably blocks exit of the E-site tRNA. This chain is Small ribosomal subunit protein uS7, found in Pediococcus pentosaceus (strain ATCC 25745 / CCUG 21536 / LMG 10740 / 183-1w).